Consider the following 432-residue polypeptide: Phosphomethylpyrimidine synthase (432 aa).

Substrate is bound by residues N66, M95, Y124, H163, 185-187, 226-229, and E265; these read SRG and DGLR. H269 provides a ligand contact to Zn(2+). Substrate is bound at residue Y292. Residue H333 coordinates Zn(2+). The [4Fe-4S] cluster site is built by C409, C412, and C416.

Belongs to the ThiC family. The cofactor is [4Fe-4S] cluster.

The catalysed reaction is 5-amino-1-(5-phospho-beta-D-ribosyl)imidazole + S-adenosyl-L-methionine = 4-amino-2-methyl-5-(phosphooxymethyl)pyrimidine + CO + 5'-deoxyadenosine + formate + L-methionine + 3 H(+). It functions in the pathway cofactor biosynthesis; thiamine diphosphate biosynthesis. Catalyzes the synthesis of the hydroxymethylpyrimidine phosphate (HMP-P) moiety of thiamine from aminoimidazole ribotide (AIR) in a radical S-adenosyl-L-methionine (SAM)-dependent reaction. The sequence is that of Phosphomethylpyrimidine synthase from Moorella thermoacetica (strain ATCC 39073 / JCM 9320).